We begin with the raw amino-acid sequence, 236 residues long: LexA repressor (236 aa).

Residues Met-1–Ser-25 form a disordered region. A DNA-binding region (H-T-H motif) is located at residues Ile-51–Arg-71. Catalysis depends on for autocatalytic cleavage activity residues Ser-160 and Lys-197.

The protein belongs to the peptidase S24 family. Homodimer.

The enzyme catalyses Hydrolysis of Ala-|-Gly bond in repressor LexA.. Functionally, represses a number of genes involved in the response to DNA damage (SOS response), including recA and lexA. In the presence of single-stranded DNA, RecA interacts with LexA causing an autocatalytic cleavage which disrupts the DNA-binding part of LexA, leading to derepression of the SOS regulon and eventually DNA repair. The sequence is that of LexA repressor from Mycobacterium tuberculosis (strain ATCC 25177 / H37Ra).